The sequence spans 504 residues: Peroxisomal N(1)-acetyl-spermine/spermidine oxidase (504 aa).

FAD is bound by residues alanine 16, glutamate 37, arginine 45, and 61 to 62; that span reads HW. Positions 64 and 187 each coordinate substrate. Valine 240 contacts FAD. Asparagine 313 is a substrate binding site. FAD-binding positions include glutamate 465 and 474–475; that span reads TT. The Microbody targeting signal motif lies at 502-504; that stretch reads PRL.

The protein belongs to the flavin monoamine oxidase family. Monomer. FAD serves as cofactor. As to expression, widely expressed at different developmental stages. Expressed at high level in the liver and the stomach, expressed at lower level in heart, spleen, thymus, small intestine, muscle, pancreas, uterus, and breast and expressed at very low level in brain, kidney, lung, testis, skin, adrenal gland and prostate gland.

The protein localises to the peroxisome. It is found in the cytoplasm. It carries out the reaction N(1)-acetylspermine + O2 + H2O = 3-acetamidopropanal + spermidine + H2O2. The enzyme catalyses N(1)-acetylspermidine + O2 + H2O = 3-acetamidopropanal + putrescine + H2O2. It catalyses the reaction N(1),N(12)-diacetylspermine + O2 + H2O = 3-acetamidopropanal + N(1)-acetylspermidine + H2O2. Its pathway is amine and polyamine metabolism; spermine metabolism. In terms of biological role, flavoenzyme which catalyzes the oxidation of N(1)-acetylspermine to spermidine and is thus involved in the polyamine back-conversion. Can also oxidize N(1)-acetylspermidine to putrescine. Substrate specificity: N(1)-acetylspermine = N(1)-acetylspermidine &gt; N(1),N(12)-diacylspermine &gt;&gt; spermine. Does not oxidize spermidine. Plays an important role in the regulation of polyamine intracellular concentration and has the potential to act as a determinant of cellular sensitivity to the antitumor polyamine analogs. In Mus musculus (Mouse), this protein is Peroxisomal N(1)-acetyl-spermine/spermidine oxidase (Paox).